The sequence spans 150 residues: uncharacterized protein (150 aa).

Tandem repeats lie at residues 101–105 (FHEVN), 106–110 (HHEVN), 111–115 (HHKIN), 116–120 (HHEVN), and 121–125 (HHKIN). The segment at 101-125 (FHEVNHHEVNHHKINHHEVNHHKIN) is 5 X 5 AA tandem repeats of [FH]-H-[EK]-[IV]-N.

This sequence belongs to the asfivirus D129L family.

This is an uncharacterized protein from African swine fever virus (isolate Tick/Malawi/Lil 20-1/1983) (ASFV).